The sequence spans 189 residues: Interferon alpha-1/13 (189 aa).

A signal peptide spans 1–23 (MASPFALLMVLVVLSCKSSCSLG). Cystine bridges form between C24–C122 and C52–C162.

It belongs to the alpha/beta interferon family. Interacts with CR2.

The protein resides in the secreted. Its function is as follows. Produced by macrophages, IFN-alpha have antiviral activities. Interferon stimulates the production of two enzymes: a protein kinase and an oligoadenylate synthetase. The sequence is that of Interferon alpha-1/13 (IFNA1) from Homo sapiens (Human).